A 320-amino-acid polypeptide reads, in one-letter code: MVSVNIEAKKIVDRMIEGADDLKISVDKLENGSTVIDCGVNVDGSIKAGELYTAVCLGGLADVGISIPGDLSERFALPSVKIKTDFPAISTLGAQKAGWSVSVGDFFALGSGPARALALKPAETYEEIGYQDEADIAVLTLEADKLPGEDVTDKIAEECDVSPENVYVLVAPTSSLVGSIQISGRVVENGTYKMLEALHFDVNKVKYAAGIAPIAPVDPDSLKAMGKTNDAVLFGGRTYYYIESEEGDDIKSLAENLPSSASEGYGKPFYDVFKEADYDFYKIDKGMFAPAEVVINDLRTGEVFRAGFVNEELLMKSFGL.

The protein belongs to the MCH family. In terms of assembly, homodimer.

It localises to the cytoplasm. The catalysed reaction is 5,10-methenyl-5,6,7,8-tetrahydromethanopterin + H2O = N(5)-formyl-5,6,7,8-tetrahydromethanopterin + H(+). The protein operates within one-carbon metabolism; methanogenesis from CO(2); 5,10-methenyl-5,6,7,8-tetrahydromethanopterin from CO(2): step 3/3. Its function is as follows. Catalyzes the reversible interconversion of 5-formyl-H(4)MPT to methenyl-H(4)MPT(+). This chain is Methenyltetrahydromethanopterin cyclohydrolase (mch), found in Methanothermobacter marburgensis (strain ATCC BAA-927 / DSM 2133 / JCM 14651 / NBRC 100331 / OCM 82 / Marburg) (Methanobacterium thermoautotrophicum).